A 290-amino-acid polypeptide reads, in one-letter code: 2-dehydro-3-deoxyphosphooctonate aldolase 1 (290 aa).

Residue A2 is modified to N-acetylalanine.

Belongs to the KdsA family. In terms of tissue distribution, expressed in shoots.

It localises to the cytoplasm. The enzyme catalyses D-arabinose 5-phosphate + phosphoenolpyruvate + H2O = 3-deoxy-alpha-D-manno-2-octulosonate-8-phosphate + phosphate. Its function is as follows. Catalyzes the stereospecific condensation of D-arabinose 5-phosphate and phosphoenolpyruvate to form 3-deoxy-D-manno-octulosonate 8-phosphate (KDO-8-phosphate) and inorganic phosphate. Involved in the biosynthesis of 3-deoxy-D-manno-octulosonate (KDO) which is an indispensable component of rhamnogalacturonan II (RG-II), a structurally complex pectic polysaccharide of the primary cell wall. RG-II is essential for the cell wall integrity of rapidly growing tissues and pollen tube growth and elongation. This is 2-dehydro-3-deoxyphosphooctonate aldolase 1 (KDSA1) from Arabidopsis thaliana (Mouse-ear cress).